The primary structure comprises 1013 residues: GTPase-activating Rap/Ran-GAP domain-like protein 3 (1013 aa).

Serine 45 carries the phosphoserine modification. Positions 191–407 (LLVLEEQEGS…RTLDMLIRSL (217 aa)) constitute a Rap-GAP domain. 2 positions are modified to phosphoserine: serine 426 and serine 432. The CNH domain occupies 489 to 800 (PHEAVCADPW…QLVASRSDIY (312 aa)). Disordered stretches follow at residues 810-842 (VSSGGSSKGASARNSPQTPPGRDTPVFPSSLGE) and 913-1013 (LLGL…IDLK). Low complexity predominate over residues 811 to 821 (SSGGSSKGASA). The residue at position 827 (threonine 827) is a Phosphothreonine. Over residues 952–962 (SSSSDRIPSGS) the composition is skewed to low complexity. Polar residues-rich tracts occupy residues 963 to 982 (LESASTSEANPEGHSASSDQ) and 993 to 1003 (VSGSSPFQLTA).

The protein belongs to the GARNL3 family.

The protein is GTPase-activating Rap/Ran-GAP domain-like protein 3 (GARNL3) of Homo sapiens (Human).